The chain runs to 121 residues: Putative iron-sulfur cluster insertion protein ErpA (121 aa).

Iron-sulfur cluster is bound by residues Cys-49, Cys-113, and Cys-115.

It belongs to the HesB/IscA family. Homodimer. The cofactor is iron-sulfur cluster.

In terms of biological role, required for insertion of 4Fe-4S clusters. The protein is Putative iron-sulfur cluster insertion protein ErpA of Paracidovorax citrulli (strain AAC00-1) (Acidovorax citrulli).